The following is a 487-amino-acid chain: MGIRMGRRLLLITLLLGALLCNNVAYAKFSRYSFPKDFIFGTGSAAYQYEGAYKEGGKGPSIWDTFTHIPGKILNNDTGDVANDFYHRYKEDVNLLKDMNMDAFRFSIAWTRILPNGSLSGGINREGVAFYNSLINDVIAKGMIPFVTIFHWDTPPGSGKQIRRLPERKHSNMHEKDYADFAEVCFHEFGDRVKYWTTFNEPFTYSAYGYGGGVFASGRCAPYVSKSCGAGDSSREPYLVTHHIHLSHAAVVHLYRTRYQPTQKGQIGMVVVTHWFVPYDDTAADRGAVQRSLDFMFGWFMDPLVHGDYPGTMRGWLGDRLPKFTPAQSAMVKGSYDFIGINYYTTYYAKSVPPPNSNELSYDVDSRANTTGFRNGKPIGPQFTPIFFNYPPGIREVLLYTKRRYNNPAIYITENGGNNSTVPEALRDGHRIEFHSKHLQFVNHAIRNGWGDGYLDRFGLIYVDRKTLTRYRKDSSYWIEDFLKKQY.

The first 27 residues, 1 to 27 (MGIRMGRRLLLITLLLGALLCNNVAYA), serve as a signal peptide directing secretion. An a beta-D-glucoside-binding site is contributed by glutamine 48. 2 N-linked (GlcNAc...) asparagine glycosylation sites follow: asparagine 76 and asparagine 116. A beta-D-glucoside-binding positions include histidine 151 and 200-201 (NE). Glutamate 201 acts as the Proton donor in catalysis. Cysteine 220 and cysteine 228 are disulfide-bonded. Tyrosine 344 contacts a beta-D-glucoside. Residue asparagine 369 is glycosylated (N-linked (GlcNAc...) asparagine). Glutamate 414 provides a ligand contact to a beta-D-glucoside. Glutamate 414 acts as the Nucleophile in catalysis. 2 N-linked (GlcNAc...) asparagine glycosylation sites follow: asparagine 418 and asparagine 419. An a beta-D-glucoside-binding site is contributed by phenylalanine 458.

Belongs to the glycosyl hydrolase 1 family.

The enzyme catalyses Hydrolysis of terminal, non-reducing beta-D-glucosyl residues with release of beta-D-glucose.. This Oryza sativa subsp. japonica (Rice) protein is Putative beta-glucosidase 35 (BGLU35).